The sequence spans 377 residues: tRNA(Met) cytidine acetate ligase (377 aa).

ATP-binding positions include 7–20, Gly-100, Asn-153, and Arg-178; that span reads ITEY…HLFH.

The protein belongs to the TmcAL family.

Its subcellular location is the cytoplasm. The enzyme catalyses cytidine(34) in elongator tRNA(Met) + acetate + ATP = N(4)-acetylcytidine(34) in elongator tRNA(Met) + AMP + diphosphate. Functionally, catalyzes the formation of N(4)-acetylcytidine (ac(4)C) at the wobble position of elongator tRNA(Met), using acetate and ATP as substrates. First activates an acetate ion to form acetyladenylate (Ac-AMP) and then transfers the acetyl group to tRNA to form ac(4)C34. In Staphylococcus epidermidis (strain ATCC 12228 / FDA PCI 1200), this protein is tRNA(Met) cytidine acetate ligase.